We begin with the raw amino-acid sequence, 107 residues long: uncharacterized protein (107 aa).

Disordered stretches follow at residues 51 to 75 (VQRS…TQSA) and 88 to 107 (NPTP…APEP). Over residues 63–75 (NGNQGSAIPTQSA) the composition is skewed to polar residues.

This is an uncharacterized protein from Fowl adenovirus A serotype 1 (strain CELO / Phelps) (FAdV-1).